Consider the following 342-residue polypeptide: Thiosulfate/3-mercaptopyruvate sulfurtransferase 2 (342 aa).

Rhodanese domains lie at Gly-56–Ser-173 and Glu-224–Val-338. The active-site Cysteine persulfide intermediate is the Cys-298.

Expressed in roots, rosette and cauline leaves, stems, flowers and siliques.

It localises to the cytoplasm. The catalysed reaction is thiosulfate + hydrogen cyanide = thiocyanate + sulfite + 2 H(+). The enzyme catalyses 2-oxo-3-sulfanylpropanoate + [thioredoxin]-dithiol = [thioredoxin]-disulfide + hydrogen sulfide + pyruvate + H(+). Its function is as follows. Catalyzes the transfer of a sulfur ion from a donor to cyanide or to other thiol compounds. Substrate preference is 3-mercaptopyruvate &gt; thiosulfate. Involved in embryo and seed development. This chain is Thiosulfate/3-mercaptopyruvate sulfurtransferase 2 (STR2), found in Arabidopsis thaliana (Mouse-ear cress).